The chain runs to 211 residues: Ribonuclease HII (211 aa).

Residues 21-211 (SSIAGLDEAG…APLKSMFDVI (191 aa)) form the RNase H type-2 domain. A divalent metal cation is bound by residues aspartate 27, glutamate 28, and aspartate 122.

It belongs to the RNase HII family. Mn(2+) is required as a cofactor. It depends on Mg(2+) as a cofactor.

It localises to the cytoplasm. It catalyses the reaction Endonucleolytic cleavage to 5'-phosphomonoester.. Its function is as follows. Endonuclease that specifically degrades the RNA of RNA-DNA hybrids. In Dehalococcoides mccartyi (strain ATCC BAA-2266 / KCTC 15142 / 195) (Dehalococcoides ethenogenes (strain 195)), this protein is Ribonuclease HII.